The sequence spans 121 residues: uncharacterized protein (121 aa).

3 helical membrane passes run 2-22 (VFVT…IYTI), 42-62 (FICI…YILF), and 89-109 (IFFA…LSIF).

It localises to the membrane. This is an uncharacterized protein from Saccharomyces cerevisiae (strain ATCC 204508 / S288c) (Baker's yeast).